The sequence spans 513 residues: Glutamate--tRNA ligase 2 (513 aa).

The short motif at 11 to 21 is the 'HIGH' region element; sequence PSPTGFLHIGS. The short motif at 240–244 is the 'KMSKS' region element; sequence KLSKR. Lysine 243 is a binding site for ATP.

This sequence belongs to the class-I aminoacyl-tRNA synthetase family. Glutamate--tRNA ligase type 1 subfamily. In terms of assembly, monomer.

Its subcellular location is the cytoplasm. The catalysed reaction is tRNA(Glu) + L-glutamate + ATP = L-glutamyl-tRNA(Glu) + AMP + diphosphate. Its function is as follows. Catalyzes the attachment of glutamate to tRNA(Glu) in a two-step reaction: glutamate is first activated by ATP to form Glu-AMP and then transferred to the acceptor end of tRNA(Glu). The sequence is that of Glutamate--tRNA ligase 2 from Rickettsia rickettsii (strain Iowa).